A 235-amino-acid chain; its full sequence is Probable tetraspanin tspB (235 aa).

Residues 1–23 (MVDTTNLIPNTPRYLKVPLIAFN) are Cytoplasmic-facing. Residues 24–44 (TILWVLGLVLVIIGSIGVSFF) traverse the membrane as a helical segment. The Extracellular segment spans residues 45–68 (SNFKDFTKVSKASAALSNLTTGAP). Residue Asn62 is glycosylated (N-linked (GlcNAc...) asparagine). The helical transmembrane segment at 69-89 (AGVLVIGIFFVILTVIGCFVA) threads the bilayer. Over 90–93 (GKEK) the chain is Cytoplasmic. A helical membrane pass occupies residues 94-114 (LVGLVIYTMLMLIILVALIGV). Residues 115–200 (GGKALTLHND…ISSNLYLVGA (86 aa)) are Extracellular-facing. Asn143 and Asn159 each carry an N-linked (GlcNAc...) asparagine glycan. A helical transmembrane segment spans residues 201 to 221 (AAVSIGVIEFICMLFALFLII). Over 222–235 (RICRAPRTKSYDYQ) the chain is Cytoplasmic.

Belongs to the tetraspanin (TM4SF) family.

It localises to the membrane. The chain is Probable tetraspanin tspB (tspB) from Dictyostelium discoideum (Social amoeba).